A 350-amino-acid polypeptide reads, in one-letter code: tRNA uridine(34) hydroxylase (350 aa).

Positions 146–240 (DDPDALFIDM…YARKAREQGL (95 aa)) constitute a Rhodanese domain. Cys-200 functions as the Cysteine persulfide intermediate in the catalytic mechanism.

This sequence belongs to the TrhO family.

The enzyme catalyses uridine(34) in tRNA + AH2 + O2 = 5-hydroxyuridine(34) in tRNA + A + H2O. Its function is as follows. Catalyzes oxygen-dependent 5-hydroxyuridine (ho5U) modification at position 34 in tRNAs. The sequence is that of tRNA uridine(34) hydroxylase from Shigella sonnei (strain Ss046).